The primary structure comprises 1085 residues: DNA repair and recombination protein RAD26 (1085 aa).

S30 bears the Phosphoserine mark. Disordered regions lie at residues 118–141 and 190–219; these read KEQV…GETE and NLTD…EEND. Over residues 128–141 the composition is skewed to basic and acidic residues; the sequence is KGSKEGLQRPGETE. A compositionally biased stretch (acidic residues) spans 210-219; the sequence is SEDDEEEEND. Positions 309–518 constitute a Helicase ATP-binding domain; sequence YELYQQNCGG…WSLFDFIFPG (210 aa). 322 to 329 contributes to the ATP binding site; sequence DEMGLGKT. The DEGH box signature appears at 469–472; that stretch reads DEGH. The region spanning 655 to 818 is the Helicase C-terminal domain; it reads VVKQLLLLWH…KRFFKIHELH (164 aa).

Belongs to the SNF2/RAD54 helicase family.

Its subcellular location is the nucleus. It catalyses the reaction ATP + H2O = ADP + phosphate + H(+). Functionally, may be involved in the preferential repair of active genes. This is DNA repair and recombination protein RAD26 (RAD26) from Saccharomyces cerevisiae (strain ATCC 204508 / S288c) (Baker's yeast).